Reading from the N-terminus, the 352-residue chain is Enhancer of mRNA-decapping protein 1 (352 aa).

Disordered regions lie at residues 1–258 and 277–352; these read MMAH…PRNH and QYPQ…SSKS. Positions 71–80 are enriched in low complexity; it reads HTSSNTSNNK. Polar residues-rich tracts occupy residues 93–104 and 205–225; these read NFGNESSHQNGG and TEPNYHVNPQVNTPPQHSVNV. Over residues 289–309 the composition is skewed to low complexity; sequence GGVYPMVAPQYQQQPQQHPQQ.

Belongs to the EDC family.

The protein localises to the cytoplasm. In terms of biological role, mRNA-binding protein which stimulates mRNA decapping. The polypeptide is Enhancer of mRNA-decapping protein 1 (EDC1) (Debaryomyces hansenii (strain ATCC 36239 / CBS 767 / BCRC 21394 / JCM 1990 / NBRC 0083 / IGC 2968) (Yeast)).